We begin with the raw amino-acid sequence, 148 residues long: Large ribosomal subunit protein bL9 (148 aa).

It belongs to the bacterial ribosomal protein bL9 family.

Binds to the 23S rRNA. The protein is Large ribosomal subunit protein bL9 of Prosthecochloris aestuarii (strain DSM 271 / SK 413).